The primary structure comprises 634 residues: Chaperone protein HtpG (634 aa).

The segment at 1–342 (MTVDTDKQTL…SADLSLNVSR (342 aa)) is a; substrate-binding. A b region spans residues 343 to 559 (EILQSGPVVD…QGDLGLQMRQ (217 aa)). Residues 560-634 (LLEASGQAVP…LNKLLLELSA (75 aa)) are c.

The protein belongs to the heat shock protein 90 family. Homodimer.

Its subcellular location is the cytoplasm. In terms of biological role, molecular chaperone. Has ATPase activity. This Xanthomonas campestris pv. campestris (strain 8004) protein is Chaperone protein HtpG.